The sequence spans 309 residues: Putative taste receptor type 2 member 33 (309 aa).

Methionine 1 is a topological domain (extracellular). A helical transmembrane segment spans residues 2–22 (VYFLPIIFSILVVFAFVLGNF). Residues 23 to 46 (SNGFIALVNVIDWVKRQKISSADQ) lie on the Cytoplasmic side of the membrane. Residues 47 to 67 (ILTALVVSRVGLLWVILLHWY) traverse the membrane as a helical segment. Topologically, residues 68–86 (ANVFNSALYSLEVRIVASN) are extracellular. N-linked (GlcNAc...) asparagine glycosylation occurs at asparagine 86. Residues 87–107 (ISAVINHFSIWLAASLSIFYL) form a helical membrane-spanning segment. Residues 108–127 (LKIANFSNLIFLHLKKRIKS) are Cytoplasmic-facing. The helical transmembrane segment at 128–148 (VVLVILLGPLVFLICNLAVIT) threads the bilayer. At 149-181 (MDERVWTKEYEGNVTWKIKLRNAIHLSSLTVTT) the chain is on the extracellular side. N-linked (GlcNAc...) asparagine glycosylation is present at asparagine 161. Residues 182 to 202 (LANLIPFTLSLICFLLLICSL) traverse the membrane as a helical segment. Residues 203-229 (CKHLKKMQLHSKGSQDPSTKVHIKALQ) are Cytoplasmic-facing. A helical transmembrane segment spans residues 230–250 (TVISFLMLCAIYFLSIMISVW). Over 251–259 (NLRSLENKP) the chain is Extracellular. A helical transmembrane segment spans residues 260-280 (VFMFCKAIRFSYPSIHPFILI). Over 281–309 (WGNKKLKQTFLSVFWQVRYWVKGEKPSSP) the chain is Cytoplasmic.

It belongs to the G-protein coupled receptor T2R family.

The protein localises to the membrane. In terms of biological role, putative taste receptor which may play a role in the perception of bitterness. The protein is Putative taste receptor type 2 member 33 of Homo sapiens (Human).